The chain runs to 168 residues: MPRSRINGNFIDKTFSIVANILLRIIPTTSGEKEAFTYYRDGMSAQSEGNYAEALQNYYEATRLEIDPYDRSYILYNIGLIHTSNGEHTKALEYYFRALERNPFLPQAFNNMAVICHYRGEQAIRQGDSEIAEAWSDQAAEYWKQAIALTPGNYIEAHNWLKITRRFE.

TPR repeat units lie at residues 35-68 (AFTY…EIDP), 72-105 (SYIL…NPFL), and 120-153 (GEQA…TPGN).

This sequence belongs to the Ycf3 family.

It is found in the plastid. The protein resides in the chloroplast thylakoid membrane. Essential for the assembly of the photosystem I (PSI) complex. May act as a chaperone-like factor to guide the assembly of the PSI subunits. This chain is Photosystem I assembly protein Ycf3, found in Ranunculus macranthus (Large buttercup).